Here is a 420-residue protein sequence, read N- to C-terminus: Serine hydroxymethyltransferase (420 aa).

Residues leucine 123 and 127–129 (GHL) contribute to the (6S)-5,6,7,8-tetrahydrofolate site. At lysine 232 the chain carries N6-(pyridoxal phosphate)lysine. 357 to 359 (SPF) serves as a coordination point for (6S)-5,6,7,8-tetrahydrofolate.

Belongs to the SHMT family. Homodimer. Pyridoxal 5'-phosphate serves as cofactor.

Its subcellular location is the cytoplasm. It carries out the reaction (6R)-5,10-methylene-5,6,7,8-tetrahydrofolate + glycine + H2O = (6S)-5,6,7,8-tetrahydrofolate + L-serine. It participates in one-carbon metabolism; tetrahydrofolate interconversion. It functions in the pathway amino-acid biosynthesis; glycine biosynthesis; glycine from L-serine: step 1/1. Catalyzes the reversible interconversion of serine and glycine with tetrahydrofolate (THF) serving as the one-carbon carrier. This reaction serves as the major source of one-carbon groups required for the biosynthesis of purines, thymidylate, methionine, and other important biomolecules. Also exhibits THF-independent aldolase activity toward beta-hydroxyamino acids, producing glycine and aldehydes, via a retro-aldol mechanism. This chain is Serine hydroxymethyltransferase, found in Streptococcus pyogenes serotype M12 (strain MGAS2096).